The primary structure comprises 71 residues: General transcription factor IIH subunit 5 (71 aa).

At Thr69 the chain carries Phosphothreonine.

Belongs to the TFB5 family. Component of the 7-subunit TFIIH core complex composed of XPB/ERCC3, XPD/ERCC2, GTF2H1, GTF2H2, GTF2H3, GTF2H4 and GTF2H5, which is active in NER. The core complex associates with the 3-subunit CDK-activating kinase (CAK) module composed of CCNH/cyclin H, CDK7 and MNAT1 to form the 10-subunit holoenzyme (holo-TFIIH) active in transcription. Part of TBP-based Pol II pre-initiation complex (PIC), in which Pol II core assembles with general transcription factors and other specific initiation factors including GTF2E1, GTF2E2, GTF2F1, GTF2F2, TCEA1, ERCC2, ERCC3, GTF2H2, GTF2H3, GTF2H4, GTF2H5, GTF2A1, GTF2A2, GTF2B and TBP; this large multi-subunit PIC complex mediates DNA unwinding and targets Pol II core to the transcription start site where the first phosphodiester bond forms.

It is found in the nucleus. It localises to the cytoplasm. Its function is as follows. Component of the general transcription and DNA repair factor IIH (TFIIH) core complex, which is involved in general and transcription-coupled nucleotide excision repair (NER) of damaged DNA and, when complexed to CAK, in RNA transcription by RNA polymerase II. In NER, TFIIH acts by opening DNA around the lesion to allow the excision of the damaged oligonucleotide and its replacement by a new DNA fragment. In transcription, TFIIH has an essential role in transcription initiation. When the pre-initiation complex (PIC) has been established, TFIIH is required for promoter opening and promoter escape. Phosphorylation of the C-terminal tail (CTD) of the largest subunit of RNA polymerase II by the kinase module CAK controls the initiation of transcription. Necessary for the stability of the TFIIH complex and for the presence of normal levels of TFIIH in the cell. The sequence is that of General transcription factor IIH subunit 5 from Homo sapiens (Human).